Reading from the N-terminus, the 178-residue chain is Large ribosomal subunit protein uL6 (178 aa).

The protein belongs to the universal ribosomal protein uL6 family. Part of the 50S ribosomal subunit.

In terms of biological role, this protein binds to the 23S rRNA, and is important in its secondary structure. It is located near the subunit interface in the base of the L7/L12 stalk, and near the tRNA binding site of the peptidyltransferase center. This Symbiobacterium thermophilum (strain DSM 24528 / JCM 14929 / IAM 14863 / T) protein is Large ribosomal subunit protein uL6.